Consider the following 120-residue polypeptide: Large ribosomal subunit protein bL20 (120 aa).

This sequence belongs to the bacterial ribosomal protein bL20 family.

Its function is as follows. Binds directly to 23S ribosomal RNA and is necessary for the in vitro assembly process of the 50S ribosomal subunit. It is not involved in the protein synthesizing functions of that subunit. The polypeptide is Large ribosomal subunit protein bL20 (Karelsulcia muelleri (strain GWSS) (Sulcia muelleri)).